Consider the following 337-residue polypeptide: MSAVRIGPYTVHNGLILAPMAGVTDQPFRQLCRQLGAGLVVSEMVTSDMSLWNSRKSRLRMIHAGDPEPRSVQIAGGDAQMMADAARANVELGAQIIDINMGCPAKKVCNKAAGSALLKDEQLVNDILQAVVAAVDVPVTLKIRTGWDRDNRNGLTVAKIAEQAGIQALAVHGRTRADLYTGEAEYDTIAMIKQAVSIPVFANGDIDSPEKARHVLQATGADGLLIGRAAQGRPWIFREIEHYLLTGKTLPALQSSEVERILLEHLAALHVFYGDVMGVRIARKHVGWYLATLPGAREFRALFNRLEDTEAQCANVREFFSQGCKGPDNQNDKEVAA.

FMN contacts are provided by residues Pro19–Ala21 and Gln73. Cys103 serves as the catalytic Proton donor. FMN is bound by residues Lys142, Asn203–Asp205, and Gly227–Arg228.

It belongs to the Dus family. DusB subfamily. Requires FMN as cofactor.

It catalyses the reaction a 5,6-dihydrouridine in tRNA + NAD(+) = a uridine in tRNA + NADH + H(+). The catalysed reaction is a 5,6-dihydrouridine in tRNA + NADP(+) = a uridine in tRNA + NADPH + H(+). Its function is as follows. Catalyzes the synthesis of 5,6-dihydrouridine (D), a modified base found in the D-loop of most tRNAs, via the reduction of the C5-C6 double bond in target uridines. This chain is tRNA-dihydrouridine synthase B, found in Pseudomonas syringae pv. tomato (strain ATCC BAA-871 / DC3000).